The following is a 275-amino-acid chain: NH(3)-dependent NAD(+) synthetase (275 aa).

An ATP-binding site is contributed by glycine 46–serine 53. Aspartate 52 provides a ligand contact to Mg(2+). Arginine 140 lines the deamido-NAD(+) pocket. Threonine 160 provides a ligand contact to ATP. Glutamate 165 is a Mg(2+) binding site. Residues lysine 173 and aspartate 180 each contribute to the deamido-NAD(+) site. Positions 189 and 211 each coordinate ATP. Histidine 260–lysine 261 contributes to the deamido-NAD(+) binding site.

This sequence belongs to the NAD synthetase family. In terms of assembly, homodimer.

It carries out the reaction deamido-NAD(+) + NH4(+) + ATP = AMP + diphosphate + NAD(+) + H(+). Its pathway is cofactor biosynthesis; NAD(+) biosynthesis; NAD(+) from deamido-NAD(+) (ammonia route): step 1/1. In terms of biological role, catalyzes the ATP-dependent amidation of deamido-NAD to form NAD. Uses ammonia as a nitrogen source. This is NH(3)-dependent NAD(+) synthetase from Salmonella choleraesuis (strain SC-B67).